The chain runs to 360 residues: 8-hydroxygeraniol dehydrogenase (360 aa).

Zn(2+)-binding residues include Cys50, His72, Cys103, Cys106, Cys109, Cys117, and Cys166.

The protein belongs to the zinc-containing alcohol dehydrogenase family. The cofactor is Zn(2+). As to expression, present in seedlings and vascular tissues (at protein level). Restricted to the epidermis.

The enzyme catalyses (6E)-8-hydroxygeraniol + 2 NADP(+) = (6E)-8-oxogeranial + 2 NADPH + 2 H(+). Functionally, dehydrogenase involved in the biosynthesis of oxogeranial from hydroxygeraniol, a precursor of the terpenoid indole alkaloids such as vinblastine and vincristine. The polypeptide is 8-hydroxygeraniol dehydrogenase (10HGO) (Catharanthus roseus (Madagascar periwinkle)).